Reading from the N-terminus, the 79-residue chain is Small ribosomal subunit protein uS17 (79 aa).

This sequence belongs to the universal ribosomal protein uS17 family. Part of the 30S ribosomal subunit.

In terms of biological role, one of the primary rRNA binding proteins, it binds specifically to the 5'-end of 16S ribosomal RNA. In Paramagnetospirillum magneticum (strain ATCC 700264 / AMB-1) (Magnetospirillum magneticum), this protein is Small ribosomal subunit protein uS17.